Here is a 286-residue protein sequence, read N- to C-terminus: Nucleotide-binding protein HCH_05324 (286 aa).

Residue 8–15 participates in ATP binding; the sequence is GRSGSGKS. Residue 60-63 coordinates GTP; sequence DARN.

The protein belongs to the RapZ-like family.

Functionally, displays ATPase and GTPase activities. This chain is Nucleotide-binding protein HCH_05324, found in Hahella chejuensis (strain KCTC 2396).